The primary structure comprises 430 residues: 3-phosphoshikimate 1-carboxyvinyltransferase (430 aa).

Residues Lys21, Ser22, and Arg26 each coordinate 3-phosphoshikimate. Lys21 contacts phosphoenolpyruvate. Phosphoenolpyruvate-binding residues include Gly95 and Arg123. Residues Thr167, Gln169, Asp315, and Lys342 each coordinate 3-phosphoshikimate. Position 169 (Gln169) interacts with phosphoenolpyruvate. Asp315 acts as the Proton acceptor in catalysis. The phosphoenolpyruvate site is built by Arg346 and Arg390.

Belongs to the EPSP synthase family. As to quaternary structure, monomer.

The protein resides in the cytoplasm. It catalyses the reaction 3-phosphoshikimate + phosphoenolpyruvate = 5-O-(1-carboxyvinyl)-3-phosphoshikimate + phosphate. Its pathway is metabolic intermediate biosynthesis; chorismate biosynthesis; chorismate from D-erythrose 4-phosphate and phosphoenolpyruvate: step 6/7. Its function is as follows. Catalyzes the transfer of the enolpyruvyl moiety of phosphoenolpyruvate (PEP) to the 5-hydroxyl of shikimate-3-phosphate (S3P) to produce enolpyruvyl shikimate-3-phosphate and inorganic phosphate. The chain is 3-phosphoshikimate 1-carboxyvinyltransferase from Endomicrobium trichonymphae.